A 635-amino-acid chain; its full sequence is tRNA uridine 5-carboxymethylaminomethyl modification enzyme MnmG (635 aa).

An FAD-binding site is contributed by Gly15–Gly20. Gly276–Phe290 provides a ligand contact to NAD(+).

It belongs to the MnmG family. Homodimer. Heterotetramer of two MnmE and two MnmG subunits. It depends on FAD as a cofactor.

It is found in the cytoplasm. In terms of biological role, NAD-binding protein involved in the addition of a carboxymethylaminomethyl (cmnm) group at the wobble position (U34) of certain tRNAs, forming tRNA-cmnm(5)s(2)U34. In Streptococcus sanguinis (strain SK36), this protein is tRNA uridine 5-carboxymethylaminomethyl modification enzyme MnmG.